Consider the following 112-residue polypeptide: Mediator of RNA polymerase II transcription subunit 22 (112 aa).

A disordered region spans residues 83-112; the sequence is KPEDGGEGQLADELLDKIEDTSDGVDKETA. Residues 96-112 show a composition bias toward basic and acidic residues; sequence LLDKIEDTSDGVDKETA.

It belongs to the Mediator complex subunit 22 family. In terms of assembly, component of the Mediator complex.

The protein localises to the nucleus. Its function is as follows. Component of the Mediator complex, a coactivator involved in the regulated transcription of nearly all RNA polymerase II-dependent genes. Mediator functions as a bridge to convey information from gene-specific regulatory proteins to the basal RNA polymerase II transcription machinery. Mediator is recruited to promoters by direct interactions with regulatory proteins and serves as a scaffold for the assembly of a functional preinitiation complex with RNA polymerase II and the general transcription factors. The chain is Mediator of RNA polymerase II transcription subunit 22 (SRB6) from Yarrowia lipolytica (strain CLIB 122 / E 150) (Yeast).